The chain runs to 178 residues: RNA pyrophosphohydrolase (178 aa).

The Nudix hydrolase domain maps to 18 to 171 (PYRPCVGLMV…KRKVYEQVVA (154 aa)). Positions 59–80 (GGIDKGEDPAQAALRELYEETG) match the Nudix box motif.

This sequence belongs to the Nudix hydrolase family. RppH subfamily. The cofactor is a divalent metal cation.

Its function is as follows. Accelerates the degradation of transcripts by removing pyrophosphate from the 5'-end of triphosphorylated RNA, leading to a more labile monophosphorylated state that can stimulate subsequent ribonuclease cleavage. In Brucella abortus (strain 2308), this protein is RNA pyrophosphohydrolase.